Reading from the N-terminus, the 154-residue chain is Terephthalate 1,2-dioxygenase, terminal oxygenase component subunit beta 2 (154 aa).

This sequence belongs to the bacterial ring-hydroxylating dioxygenase beta subunit family. Heterotetramer composed of 2 alpha (TphA2I and TphA2II) and 2 beta (TphA3I and TphA3II) subunits. Part of a multicomponent enzyme system composed of a reductase (TphA1I or TphA1II) and a two-subunit oxygenase component (TphA2I or TphA2II and TphA3I or TphA3II). Fe cation is required as a cofactor.

It catalyses the reaction terephthalate + NADH + O2 + H(+) = (3S,4R)-3,4-dihydroxycyclohexa-1,5-diene-1,4-dicarboxylate + NAD(+). With respect to regulation, inhibited by EDTA. In terms of biological role, component of the terephthalate 1,2-dioxygenase multicomponent enzyme system which catalyzes the dioxygenation of terephthalate (TER/TPA) to 1,2-dihydroxy-3,5-cyclohexadiene-1,4-dicarboxylic acid (DCD). It can also use 2,5-dicarboxypyridine (PDC) and 1,4-napthalenedicarboxylic acid (NDC) as substrates, and preferentially uses NADPH which is the physiological electron donor. This chain is Terephthalate 1,2-dioxygenase, terminal oxygenase component subunit beta 2 (tphA3II), found in Comamonas sp.